The sequence spans 184 residues: GTP cyclohydrolase 1 (184 aa).

Zn(2+) contacts are provided by Cys75, His78, and Cys146.

The protein belongs to the GTP cyclohydrolase I family. Homomer.

The enzyme catalyses GTP + H2O = 7,8-dihydroneopterin 3'-triphosphate + formate + H(+). It functions in the pathway cofactor biosynthesis; 7,8-dihydroneopterin triphosphate biosynthesis; 7,8-dihydroneopterin triphosphate from GTP: step 1/1. This chain is GTP cyclohydrolase 1, found in Coxiella burnetii (strain Dugway 5J108-111).